Consider the following 121-residue polypeptide: Large ribosomal subunit protein uL14c (121 aa).

Belongs to the universal ribosomal protein uL14 family. In terms of assembly, part of the 50S ribosomal subunit.

The protein resides in the plastid. It is found in the chloroplast. Its function is as follows. Binds to 23S rRNA. The protein is Large ribosomal subunit protein uL14c of Emiliania huxleyi (Coccolithophore).